The primary structure comprises 150 residues: Cell division protein SepF (150 aa).

It belongs to the SepF family. In terms of assembly, homodimer. Interacts with FtsZ.

Its subcellular location is the cytoplasm. Cell division protein that is part of the divisome complex and is recruited early to the Z-ring. Probably stimulates Z-ring formation, perhaps through the cross-linking of FtsZ protofilaments. Its function overlaps with FtsA. This is Cell division protein SepF from Clostridium botulinum (strain Kyoto / Type A2).